A 1059-amino-acid polypeptide reads, in one-letter code: Cellulose synthase catalytic subunit A [UDP-forming] (1059 aa).

Disordered regions lie at residues 1–159 and 174–220; these read MDRN…RFDT and MRQH…KHVA. Positions 15-36 are enriched in low complexity; the sequence is NNINSSGGSYNNSMNNSSNNIG. Composition is skewed to polar residues over residues 40–57 and 142–154; these read GNNQ…QSNL and NSPS…TSGG. Residues 181-194 show a composition bias toward low complexity; it reads QEQQQQQQQQQQQQ. The span at 204-219 shows a compositional bias: basic residues; the sequence is QKKKPSSMQLSKKKHV. A run of 3 helical transmembrane segments spans residues 246–266, 280–300, and 306–323; these read FSHA…IFYF, ITFS…LGSA, and FTNP…QILA. Positions 328–628 are catalytic subdomain A; sequence KHPTVMMYVC…FLGLLDADQQ (301 aa). Asp370 is an active-site residue. Residues Asp624 and Asp626 each contribute to the substrate site. The segment at 701–761 is catalytic subdomain B; sequence QPLYDIGGIM…EQRKRWAQGA (61 aa). The active site involves Asp717. Transmembrane regions (helical) follow at residues 790–810 and 813–833; these read IYPF…IMSI and VPIV…PVMV. The interval 933-953 is disordered; it reads DNAQESSGKHKAEQSFRTSNK. The span at 939–953 shows a compositional bias: basic and acidic residues; that stretch reads SGKHKAEQSFRTSNK. A run of 3 helical transmembrane segments spans residues 963–983, 993–1013, and 1035–1055; these read LFLP…SAVL, WLLV…WSFI, and IVLF…KVCI.

This sequence belongs to the glycosyltransferase 2 family. The cofactor is Mg(2+).

The protein resides in the membrane. It carries out the reaction [(1-&gt;4)-beta-D-glucosyl](n) + UDP-alpha-D-glucose = [(1-&gt;4)-beta-D-glucosyl](n+1) + UDP + H(+). It participates in glycan metabolism; amoeba cellulose biosynthesis. Functionally, catalytic subunit of cellulose synthase. It incorporates glucose from uridine 5'-diphosphate glucose (UDP-alpha-D-glucose) to cellulose (a (1-&gt;4)-beta-D-glucan), which is produced as an extracellular component for mechanical and chemical protection at the onset of the stalk formation, when the cells exhibit multicellular behavior during culmination. The chain is Cellulose synthase catalytic subunit A [UDP-forming] (dcsA) from Dictyostelium discoideum (Social amoeba).